Here is a 419-residue protein sequence, read N- to C-terminus: 3-isopropylmalate dehydratase large subunit (419 aa).

Cys300, Cys360, and Cys363 together coordinate [4Fe-4S] cluster.

The protein belongs to the aconitase/IPM isomerase family. LeuC type 2 subfamily. Heterodimer of LeuC and LeuD. The cofactor is [4Fe-4S] cluster.

It carries out the reaction (2R,3S)-3-isopropylmalate = (2S)-2-isopropylmalate. The protein operates within amino-acid biosynthesis; L-leucine biosynthesis; L-leucine from 3-methyl-2-oxobutanoate: step 2/4. Functionally, catalyzes the isomerization between 2-isopropylmalate and 3-isopropylmalate, via the formation of 2-isopropylmaleate. The sequence is that of 3-isopropylmalate dehydratase large subunit from Clostridium botulinum (strain Eklund 17B / Type B).